We begin with the raw amino-acid sequence, 77 residues long: Translation initiation factor IF-1, chloroplastic (77 aa).

Positions 1 to 71 constitute an S1-like domain; it reads MKRQKWIHEG…TRGRIIYRLR (71 aa).

Belongs to the IF-1 family. As to quaternary structure, component of the 30S ribosomal translation pre-initiation complex which assembles on the 30S ribosome in the order IF-2 and IF-3, IF-1 and N-formylmethionyl-tRNA(fMet); mRNA recruitment can occur at any time during PIC assembly.

The protein resides in the plastid. It localises to the chloroplast. One of the essential components for the initiation of protein synthesis. Stabilizes the binding of IF-2 and IF-3 on the 30S subunit to which N-formylmethionyl-tRNA(fMet) subsequently binds. Helps modulate mRNA selection, yielding the 30S pre-initiation complex (PIC). Upon addition of the 50S ribosomal subunit IF-1, IF-2 and IF-3 are released leaving the mature 70S translation initiation complex. This is Translation initiation factor IF-1, chloroplastic from Leucophyllum frutescens (Texas ranger).